The chain runs to 151 residues: uncharacterized protein (151 aa).

The 149-residue stretch at 3–151 folds into the N-acetyltransferase domain; sequence IKIDDLTGRQ…PNSVFMTKKL (149 aa).

This sequence belongs to the acetyltransferase family.

This is an uncharacterized protein from Bacillus subtilis (strain 168).